The following is a 1214-amino-acid chain: MVVPEKEQSWIPKIFKKKTCTTFIVDSTDPGGTLCQCGRPRTAHPAVAMEDAFGAAVVTVWDSDAHTTEKPTDAYGELDFTGAGRKHSNFLRLSDRTDPAAVYSLVTRTWGFRAPNLVVSVLGGSGGPVLQTWLQDLLRRGLVRAAQSTGAWIVTGGLHTGIGRHVGVAVRDHQMASTGGTKVVAMGVAPWGVVRNRDTLINPKGSFPARYRWRGDPEDGVQFPLDYNYSAFFLVDDGTHGCLGGENRFRLRLESYISQQKTGVGGTGIDIPVLLLLIDGDEKMLTRIENATQAQLPCLLVAGSGGAADCLAETLEDTLAPGSGGARQGEARDRIRRFFPKGDLEVLQAQVERIMTRKELLTVYSSEDGSEEFETIVLKALVKACGSSEASAYLDELRLAVAWNRVDIAQSELFRGDIQWRSFHLEASLMDALLNDRPEFVRLLISHGLSLGHFLTPMRLAQLYSAAPSNSLIRNLLDQASHSAGTKAPALKGGAAELRPPDVGHVLRMLLGKMCAPRYPSGGAWDPHPGQGFGESMYLLSDKATSPLSLDAGLGQAPWSDLLLWALLLNRAQMAMYFWEMGSNAVSSALGACLLLRVMARLEPDAEEAARRKDLAFKFEGMGVDLFGECYRSSEVRAARLLLRRCPLWGDATCLQLAMQADARAFFAQDGVQSLLTQKWWGDMASTTPIWALVLAFFCPPLIYTRLITFRKSEEEPTREELEFDMDSVINGEGPVGTADPAEKTPLGVPRQSGRPGCCGGRCGGRRCLRRWFHFWGAPVTIFMGNVVSYLLFLLLFSRVLLVDFQPAPPGSLELLLYFWAFTLLCEELRQGLSGGGGSLASGGPGPGHASLSQRLRLYLADSWNQCDLVALTCFLLGVGCRLTPGLYHLGRTVLCIDFMVFTVRLLHIFTVNKQLGPKIVIVSKMMKDVFFFLFFLGVWLVAYGVATEGLLRPRDSDFPSILRRVFYRPYLQIFGQIPQEDMDVALMEHSNCSSEPGFWAHPPGAQAGTCVSQYANWLVVLLLVIFLLVANILLVNLLIAMFSYTFGKVQGNSDLYWKAQRYRLIREFHSRPALAPPFIVISHLRLLLRQLCRRPRSPQPSSPALEHFRVYLSKEAERKLLTWESVHKENFLLARARDKRESDSERLKRTSQKVDLALKQLGHIREYEQRLKVLEREVQQCSRVLGWVAEALSRSALLPPGGPPPPDLPGSKD.

Over 1 to 782 (MVVPEKEQSW…FHFWGAPVTI (782 aa)) the chain is Cytoplasmic. Arginine 171, arginine 214, and leucine 225 together coordinate ATP. Ca(2+) contacts are provided by aspartate 270, alanine 392, aspartate 395, and glutamate 396. ATP-binding residues include arginine 421 and glycine 448. A helical transmembrane segment spans residues 783–803 (FMGNVVSYLLFLLLFSRVLLV). Residues 804–814 (DFQPAPPGSLE) lie on the Extracellular side of the membrane. A helical membrane pass occupies residues 815-835 (LLLYFWAFTLLCEELRQGLSG). Ca(2+)-binding residues include glutamate 828 and glutamine 831. At 836–863 (GGGSLASGGPGPGHASLSQRLRLYLADS) the chain is on the cytoplasmic side. Residues 864-884 (WNQCDLVALTCFLLGVGCRLT) form a helical membrane-spanning segment. The Ca(2+) site is built by asparagine 865 and aspartate 868. The Extracellular portion of the chain corresponds to 885 to 886 (PG). The helical transmembrane segment at 887 to 910 (LYHLGRTVLCIDFMVFTVRLLHIF) threads the bilayer. Over 911–930 (TVNKQLGPKIVIVSKMMKDV) the chain is Cytoplasmic. A helical transmembrane segment spans residues 931 to 951 (FFFLFFLGVWLVAYGVATEGL). Residues 952–963 (LRPRDSDFPSIL) lie on the Extracellular side of the membrane. Positions 964–984 (RRVFYRPYLQIFGQIPQEDMD) form an intramembrane region, pore-forming. The Selectivity filter motif lies at 975–977 (FGQ). The Extracellular segment spans residues 985-1019 (VALMEHSNCSSEPGFWAHPPGAQAGTCVSQYANWL). Asparagine 992 is a glycosylation site (N-linked (GlcNAc...) asparagine). Cysteine 993 and cysteine 1011 are joined by a disulfide. Residues 1020-1040 (VVLLLVIFLLVANILLVNLLI) traverse the membrane as a helical segment. At 1041–1214 (AMFSYTFGKV…PPPDLPGSKD (174 aa)) the chain is on the cytoplasmic side. The segment at 1076–1176 (APPFIVISHL…EYEQRLKVLE (101 aa)) is calmodulin-binding. A coiled-coil region spans residues 1134 to 1187 (LARARDKRESDSERLKRTSQKVDLALKQLGHIREYEQRLKVLEREVQQCSRVLG). The segment at 1136–1141 (RARDKR) is mediates modulation by decavanadate and PIP2-binding. Residues serine 1145 and serine 1152 each carry the phosphoserine; by PKC modification.

This sequence belongs to the transient receptor (TC 1.A.4) family. LTrpC subfamily. TRPM4 sub-subfamily. As to quaternary structure, homotetramer. In terms of processing, phosphorylation by PKC leads to increase the sensitivity to Ca(2+). Post-translationally, sumoylated. Desumoylated by SENP1. In terms of tissue distribution, widely expressed with a high expression in intestine and prostate. In brain, it is both expressed in whole cerebral arteries and isolated vascular smooth muscle cells. Prominently expressed in Purkinje fibers. Expressed at higher levels in T-helper 2 (Th2) cells as compared to T-helper 1 (Th1) cells. Expressed in keratocytes.

It is found in the cell membrane. The protein localises to the endoplasmic reticulum. It localises to the golgi apparatus. It carries out the reaction Na(+)(in) = Na(+)(out). The enzyme catalyses K(+)(in) = K(+)(out). Displays weak voltage dependence, and repressed by decavanadate. Calmodulin-binding confers the Ca(2+) sensitivity. ATP is able to restore Ca(2+) sensitivity after desensitization. ATP inhibits channel activity. Phosphatidylinositol 4,5-bisphosphate (PIP2)-binding strongly enhances activity, by increasing the channel's Ca(2+) sensitivity and shifting its voltage dependence of activation towards negative potentials. Activity is also enhanced by 3,5-bis(trifluoromethyl)pyrazole derivative (BTP2). Exhibits pronounced temperature sensitivity, with activities strongly intensifying near physiological temperatures. Its function is as follows. Calcium-activated selective cation channel that mediates membrane depolarization. While it is activated by increase in intracellular Ca(2+), it is impermeable to it. Mediates transport of monovalent cations (Na(+) &gt; K(+) &gt; Cs(+) &gt; Li(+)), leading to depolarize the membrane. It thereby plays a central role in cadiomyocytes, neurons from entorhinal cortex, dorsal root and vomeronasal neurons, endocrine pancreas cells, kidney epithelial cells, cochlea hair cells etc. Participates in T-cell activation by modulating Ca(2+) oscillations after T lymphocyte activation, which is required for NFAT-dependent IL2 production. Involved in myogenic constriction of cerebral arteries. Controls insulin secretion in pancreatic beta-cells. May also be involved in pacemaking or could cause irregular electrical activity under conditions of Ca(2+) overload. Affects T-helper 1 (Th1) and T-helper 2 (Th2) cell motility and cytokine production through differential regulation of calcium signaling and NFATC1 localization. Enhances cell proliferation through up-regulation of the beta-catenin signaling pathway. Plays a role in keratinocyte differentiation. Lacks channel activity. This is Transient receptor potential cation channel subfamily M member 4 from Homo sapiens (Human).